Consider the following 569-residue polypeptide: Urease subunit alpha (569 aa).

Residues 131-569 (GSIDTHIHFI…VPMAQRYFLL (439 aa)) form the Urease domain. Positions 136, 138, and 219 each coordinate Ni(2+). N6-carboxylysine is present on K219. Residue H221 coordinates substrate. Ni(2+) is bound by residues H248 and H274. Residue H322 is the Proton donor of the active site. D362 contributes to the Ni(2+) binding site.

The protein belongs to the metallo-dependent hydrolases superfamily. Urease alpha subunit family. Heterotrimer of UreA (gamma), UreB (beta) and UreC (alpha) subunits. Three heterotrimers associate to form the active enzyme. Ni cation serves as cofactor. Carboxylation allows a single lysine to coordinate two nickel ions.

Its subcellular location is the cytoplasm. The catalysed reaction is urea + 2 H2O + H(+) = hydrogencarbonate + 2 NH4(+). It functions in the pathway nitrogen metabolism; urea degradation; CO(2) and NH(3) from urea (urease route): step 1/1. The chain is Urease subunit alpha from Prochlorococcus marinus (strain MIT 9215).